A 364-amino-acid chain; its full sequence is UDP-N-acetylglucosamine--N-acetylmuramyl-(pentapeptide) pyrophosphoryl-undecaprenol N-acetylglucosamine transferase (364 aa).

UDP-N-acetyl-alpha-D-glucosamine contacts are provided by residues 10–12, N124, S195, and Q295; that span reads TGG.

The protein belongs to the glycosyltransferase 28 family. MurG subfamily.

It localises to the cell membrane. The catalysed reaction is di-trans,octa-cis-undecaprenyl diphospho-N-acetyl-alpha-D-muramoyl-L-alanyl-D-glutamyl-meso-2,6-diaminopimeloyl-D-alanyl-D-alanine + UDP-N-acetyl-alpha-D-glucosamine = di-trans,octa-cis-undecaprenyl diphospho-[N-acetyl-alpha-D-glucosaminyl-(1-&gt;4)]-N-acetyl-alpha-D-muramoyl-L-alanyl-D-glutamyl-meso-2,6-diaminopimeloyl-D-alanyl-D-alanine + UDP + H(+). It functions in the pathway cell wall biogenesis; peptidoglycan biosynthesis. Its function is as follows. Cell wall formation. Catalyzes the transfer of a GlcNAc subunit on undecaprenyl-pyrophosphoryl-MurNAc-pentapeptide (lipid intermediate I) to form undecaprenyl-pyrophosphoryl-MurNAc-(pentapeptide)GlcNAc (lipid intermediate II). The polypeptide is UDP-N-acetylglucosamine--N-acetylmuramyl-(pentapeptide) pyrophosphoryl-undecaprenol N-acetylglucosamine transferase (Bacillus pumilus (strain SAFR-032)).